Reading from the N-terminus, the 305-residue chain is Tetraspanin-12 (305 aa).

Residues 1-12 (MAREDSVKCLRC) are Cytoplasmic-facing. 2 S-palmitoyl cysteine lipidation sites follow: C9 and C12. Residues 13–33 (LLYALNLLFWLMSISVLAVSA) form a helical membrane-spanning segment. Residues 34-59 (WMRDYLNNVLTLTAETRVEEAVILTY) lie on the Extracellular side of the membrane. A helical membrane pass occupies residues 60–80 (FPVVHPVMIAVCCFLIIVGML). The S-palmitoyl cysteine moiety is linked to residue C83. Residues 90-110 (LLLLAWYFGTLLVIFCVELAC) traverse the membrane as a helical segment. Over 111 to 224 (GVWTYEQEVM…RGTKQLQVLR (114 aa)) the chain is Extracellular. Residues 225–245 (FLGISIGVTQILAMILTITLL) form a helical membrane-spanning segment. The Cytoplasmic segment spans residues 246–305 (WALYYDRREPGTDQMLSLKNDASQHLSCHSVELLKPSLSRIFEHTSMANSFNTHFEMEEL).

The protein belongs to the tetraspanin (TM4SF) family. Component of a complex, at least composed of TSPAN12, FZD4 and norrin (NDP). Interacts (when palmitoylated) with ADAM10. Interacts with MMP14/MT1-MMP. Palmitoylated; required for interaction with ADAM10. The precise position of palmitoylated residues is unclear and occurs either on Cys-9, Cys-12 and/or Cys-83.

It localises to the cell membrane. In terms of biological role, regulator of cell surface receptor signal transduction. Plays a central role in retinal vascularization by regulating norrin (NDP) signal transduction. Acts in concert with norrin (NDP) to promote FZD4 multimerization and subsequent activation of FZD4, leading to promote accumulation of beta-catenin (CTNNB1) and stimulate LEF/TCF-mediated transcriptional programs. Suprisingly, it only activates the norrin (NDP)-dependent activation of FZD4, while it does not activate the Wnt-dependent activation of FZD4, suggesting the existence of a Wnt-independent signaling that also promote accumulation the beta-catenin (CTNNB1). Acts as a regulator of membrane proteinases such as ADAM10 and MMP14/MT1-MMP. Activates ADAM10-dependent cleavage activity of amyloid precursor protein (APP). Activates MMP14/MT1-MMP-dependent cleavage activity. This is Tetraspanin-12 (Tspan12) from Rattus norvegicus (Rat).